We begin with the raw amino-acid sequence, 300 residues long: Acyl-CoA-binding domain-containing protein 6 (300 aa).

The segment covering 1–19 (MASRSPSSSPDSATGSGTD) has biased composition (low complexity). Positions 1 to 43 (MASRSPSSSPDSATGSGTDPARPDTGEPLGGGSDSDSDFGLGK) are disordered. In terms of domain architecture, ACB spans 60 to 145 (LENEFESAAD…VHALDPEGSQ (86 aa)). Residues 87–91 (YARFK), Lys-113, and Tyr-132 each bind an acyl-CoA. The disordered stretch occupies residues 142–162 (EGSQKSSERRGGEKRTGFGGP). The segment covering 147-157 (SSERRGGEKRT) has biased composition (basic and acidic residues). ANK repeat units follow at residues 209–238 (EGRALLHWACDRGHKDLVSLLLQNNADINS) and 242–271 (EGQTALHYASACEFAEIVELLLKAGADPSI). The interval 270–300 (SIKDQEGSLPEEVTESSAISSLLRQYTAPKG) is disordered. The segment covering 284-293 (ESSAISSLLR) has biased composition (polar residues).

As to expression, higly expressed in the central nervous system, developing eyes, otic vesicle, and trunk muscles.

The protein resides in the cytoplasm. It localises to the nucleus. In terms of biological role, binds long-chain acyl-coenzyme A molecules with a strong preference for unsaturated C18:1-CoA. Does not bind fatty acids. Plays a role in protein N-myristoylation. This Danio rerio (Zebrafish) protein is Acyl-CoA-binding domain-containing protein 6 (acbd6).